We begin with the raw amino-acid sequence, 141 residues long: Large ribosomal subunit protein bL17 (141 aa).

This sequence belongs to the bacterial ribosomal protein bL17 family. In terms of assembly, part of the 50S ribosomal subunit. Contacts protein L32.

This Maridesulfovibrio salexigens (strain ATCC 14822 / DSM 2638 / NCIMB 8403 / VKM B-1763) (Desulfovibrio salexigens) protein is Large ribosomal subunit protein bL17.